Here is a 170-residue protein sequence, read N- to C-terminus: MDQSVPSENQPETGEGRTIIDIAGIMKMIPHRYPFLLVDRVIDIVRGERGIGIKNVTASESHFAGHFPNHPVMPGVLIIESMAQTAAVLVVDALGTDAEGRVVYFMSIEGAKFRRPVVPGDQLRIECERLQHRGNVWKFRGTARVDGQIVAEASFAAMILRPSPAQQAEA.

Residue His-66 is part of the active site.

The protein belongs to the thioester dehydratase family. FabZ subfamily.

It localises to the cytoplasm. It catalyses the reaction a (3R)-hydroxyacyl-[ACP] = a (2E)-enoyl-[ACP] + H2O. Involved in unsaturated fatty acids biosynthesis. Catalyzes the dehydration of short chain beta-hydroxyacyl-ACPs and long chain saturated and unsaturated beta-hydroxyacyl-ACPs. This chain is 3-hydroxyacyl-[acyl-carrier-protein] dehydratase FabZ, found in Granulibacter bethesdensis (strain ATCC BAA-1260 / CGDNIH1).